The chain runs to 390 residues: Neuromedin-B receptor (390 aa).

Positions 1-20 are disordered; it reads MPPRSLPNLSLPTEASESEL. Topologically, residues 1-41 are extracellular; the sequence is MPPRSLPNLSLPTEASESELEPEVWENDFLPDSDGTTAELV. The N-linked (GlcNAc...) asparagine glycan is linked to asparagine 8. A helical transmembrane segment spans residues 42 to 65; sequence IRCVIPSLYLIIISVGLLGNIMLV. Over 66-79 the chain is Cytoplasmic; sequence KIFLTNSTMRSVPN. A helical transmembrane segment spans residues 80–99; the sequence is IFISNLAAGDLLLLLTCVPV. Residues 100 to 117 are Extracellular-facing; that stretch reads DASRYFFDEWVFGKLGCK. A disulfide bridge connects residues cysteine 116 and cysteine 198. The chain crosses the membrane as a helical span at residues 118 to 139; it reads LIPAIQLTSVGVSVFTLTALSA. Residues 140–156 lie on the Cytoplasmic side of the membrane; the sequence is DRYRAIVNPMDMQTSGV. Residues 157–177 form a helical membrane-spanning segment; sequence VLWTSLKAVGIWVVSVLLAVP. Topologically, residues 178-211 are extracellular; the sequence is EAVFSEVARIGSSDNSSFTACIPYPQTDELHPKI. A glycan (N-linked (GlcNAc...) asparagine) is linked at asparagine 192. Residues 212 to 235 form a helical membrane-spanning segment; the sequence is HSVLIFLVYFLIPLVIISIYYYHI. At 236-266 the chain is on the cytoplasmic side; it reads AKTLIRSAHNLPGEYNEHTKKQMETRKRLAK. The helical transmembrane segment at 267–287 threads the bilayer; the sequence is IVLVFVGCFVFCWFPNHILYL. Over 288–299 the chain is Extracellular; sequence YRSFNYKEIDPS. A helical transmembrane segment spans residues 300–327; sequence LGHMIVTLVARVLSFSNSCVNPFALYLL. Residues 328–390 are Cytoplasmic-facing; sequence SESFRKHFNS…GHSTKQEIAL (63 aa). Residue cysteine 341 is the site of S-palmitoyl cysteine attachment. Phosphoserine is present on serine 352.

This sequence belongs to the G-protein coupled receptor 1 family. Brain (olfactory bulb and central thalamic regions), and esophagus.

It is found in the cell membrane. Receptor for neuromedin-B. Contributes to the maintenance of basal sigh rate through signaling in the pre-Botzinger complex, a cluster of several thousand neurons in the ventrolateral medulla responsible for inspiration during respiratory activity. Contributes to the induction of sneezing following exposure to chemical irritants or allergens which causes release of NMB by nasal sensory neurons and activation of NMBR-expressing neurons in the sneeze-evoking region of the brainstem. These in turn activate neurons of the caudal ventral respiratory group, giving rise to the sneezing response. Contributes to induction of acute itch, possibly through its activation on dorsal root ganglion neurons by the NMB peptide. Plays a role in the innate immune response to influenza A virus infection by enhancing interferon alpha expression and reducing expression of IL6. Plays a role in CSF1-induced proliferation of osteoclast precursors by contributing to the positive regulation of the expression of the CSF1 receptor CSF1R. The protein is Neuromedin-B receptor (Nmbr) of Rattus norvegicus (Rat).